We begin with the raw amino-acid sequence, 212 residues long: Pyridoxine/pyridoxamine 5'-phosphate oxidase (212 aa).

Substrate-binding positions include 7–10 (RAKY) and lysine 65. Residues 60–65 (RTVLLK), 75–76 (FT), lysine 82, and glutamine 104 each bind FMN. Substrate-binding residues include tyrosine 122, arginine 126, and serine 130. FMN-binding positions include 139–140 (QS) and tryptophan 184. 190-192 (RLH) is a substrate binding site. Residue arginine 194 participates in FMN binding.

The protein belongs to the pyridoxamine 5'-phosphate oxidase family. Homodimer. It depends on FMN as a cofactor.

It catalyses the reaction pyridoxamine 5'-phosphate + O2 + H2O = pyridoxal 5'-phosphate + H2O2 + NH4(+). The catalysed reaction is pyridoxine 5'-phosphate + O2 = pyridoxal 5'-phosphate + H2O2. It participates in cofactor metabolism; pyridoxal 5'-phosphate salvage; pyridoxal 5'-phosphate from pyridoxamine 5'-phosphate: step 1/1. It functions in the pathway cofactor metabolism; pyridoxal 5'-phosphate salvage; pyridoxal 5'-phosphate from pyridoxine 5'-phosphate: step 1/1. Catalyzes the oxidation of either pyridoxine 5'-phosphate (PNP) or pyridoxamine 5'-phosphate (PMP) into pyridoxal 5'-phosphate (PLP). This chain is Pyridoxine/pyridoxamine 5'-phosphate oxidase, found in Aliarcobacter butzleri (strain RM4018) (Arcobacter butzleri).